Reading from the N-terminus, the 300-residue chain is Jacalin-related lectin 32 (300 aa).

An N-acetylalanine modification is found at A2. Jacalin-type lectin domains lie at 2–146 (AQKV…YFTT) and 154–297 (AKKL…HILP).

This sequence belongs to the jacalin lectin family.

In terms of biological role, involved in gametophytic development. This Arabidopsis thaliana (Mouse-ear cress) protein is Jacalin-related lectin 32 (JAL32).